The sequence spans 157 residues: Sorting nexin-3 (157 aa).

Residues 1 to 21 (MSKPFQPISDVINTSPKNKSQ) are disordered. Residues 11-21 (VINTSPKNKSQ) are compositionally biased toward polar residues. One can recognise a PX domain in the interval 32-152 (NFLEIEVKNP…EFIQNEKWDP (121 aa)). Positions 75, 77, 101, and 117 each coordinate a 1,2-diacyl-sn-glycero-3-phospho-(1D-myo-inositol-3-phosphate).

Belongs to the sorting nexin family.

Its subcellular location is the cytoplasm. The protein resides in the golgi apparatus membrane. It is found in the prevacuolar compartment membrane. In terms of biological role, required for retention of late Golgi membrane proteins. Component of the retrieval machinery that functions by direct interaction with the cytosolic tails of certain TGN membrane proteins during the sorting/budding process at the prevacuolar compartment. Binds phosphatidylinositol 3-phosphate (PtdIns(P3)). This Candida albicans (strain SC5314 / ATCC MYA-2876) (Yeast) protein is Sorting nexin-3 (SNX3).